The following is a 1069-amino-acid chain: Rab GTPase-activating protein 1 (1069 aa).

A disordered region spans residues 1-79 (MDDKASVGKI…DPPMDDQPGE (79 aa)). Residues 7-22 (VGKISVSSDSVSTLNS) show a composition bias toward low complexity. S42 is subject to Phosphoserine. One can recognise a PID domain in the interval 142–298 (EDSVVFSKLT…IFTFSVSLEI (157 aa)). S360 is modified (phosphoserine). The tract at residues 482 to 527 (ERERRKTTASPSVRLPQSGSQSSVIPSPPEDDEEEDNDEPLLSGSG) is disordered. Over residues 489-506 (TASPSVRLPQSGSQSSVI) the composition is skewed to polar residues. Positions 510-520 (PEDDEEEDNDE) are enriched in acidic residues. The region spanning 566 to 752 (GVPEALRGEV…HIIDLLLCEG (187 aa)) is the Rab-GAP TBC domain. The stretch at 798–1047 (KKLMELACNM…ALNEVQAAKK (250 aa)) forms a coiled coil. At T996 the chain carries Phosphothreonine.

As to quaternary structure, interacts with RAB6A and tubulin gamma.

Its subcellular location is the cytoplasm. The protein localises to the cytosol. It localises to the cytoskeleton. It is found in the microtubule organizing center. The protein resides in the centrosome. In terms of biological role, may act as a GTPase-activating protein of RAB6A. May play a role in microtubule nucleation by centrosome. May participate in a RAB6A-mediated pathway involved in the metaphase-anaphase transition. The sequence is that of Rab GTPase-activating protein 1 (RABGAP1) from Homo sapiens (Human).